Here is a 369-residue protein sequence, read N- to C-terminus: Phenylalanine--tRNA ligase alpha subunit (369 aa).

E269 provides a ligand contact to Mg(2+).

Belongs to the class-II aminoacyl-tRNA synthetase family. Phe-tRNA synthetase alpha subunit type 1 subfamily. As to quaternary structure, tetramer of two alpha and two beta subunits. Mg(2+) is required as a cofactor.

It is found in the cytoplasm. The catalysed reaction is tRNA(Phe) + L-phenylalanine + ATP = L-phenylalanyl-tRNA(Phe) + AMP + diphosphate + H(+). The protein is Phenylalanine--tRNA ligase alpha subunit of Brucella ovis (strain ATCC 25840 / 63/290 / NCTC 10512).